Consider the following 184-residue polypeptide: Elongation factor P 1 (184 aa).

This sequence belongs to the elongation factor P family.

The protein resides in the cytoplasm. It participates in protein biosynthesis; polypeptide chain elongation. Functionally, involved in peptide bond synthesis. Stimulates efficient translation and peptide-bond synthesis on native or reconstituted 70S ribosomes in vitro. Probably functions indirectly by altering the affinity of the ribosome for aminoacyl-tRNA, thus increasing their reactivity as acceptors for peptidyl transferase. This Protochlamydia amoebophila (strain UWE25) protein is Elongation factor P 1 (efp1).